The following is a 347-amino-acid chain: Dihydroorotase (347 aa).

The Zn(2+) site is built by H17 and H19. Residues 19–21 (HLR) and N45 each bind substrate. Residues K103, H140, and H178 each coordinate Zn(2+). K103 carries the post-translational modification N6-carboxylysine. Substrate is bound at residue H140. L223 contributes to the substrate binding site. D251 provides a ligand contact to Zn(2+). The active site involves D251. Residues H255 and A267 each coordinate substrate.

This sequence belongs to the metallo-dependent hydrolases superfamily. DHOase family. Class II DHOase subfamily. In terms of assembly, homodimer. Requires Zn(2+) as cofactor.

The catalysed reaction is (S)-dihydroorotate + H2O = N-carbamoyl-L-aspartate + H(+). It functions in the pathway pyrimidine metabolism; UMP biosynthesis via de novo pathway; (S)-dihydroorotate from bicarbonate: step 3/3. Its function is as follows. Catalyzes the reversible cyclization of carbamoyl aspartate to dihydroorotate. The protein is Dihydroorotase of Citrobacter koseri (strain ATCC BAA-895 / CDC 4225-83 / SGSC4696).